A 380-amino-acid chain; its full sequence is RNA-binding motif protein, Y chromosome (380 aa).

The region spanning 8–86 (GKIFIGGLNI…KRIKVKQARR (79 aa)) is the RRM domain. Disordered stretches follow at residues 82–226 (KQAR…STSR) and 279–358 (HEAP…YSAS). Polar residues predominate over residues 166–178 (RSATSAQTRSNTG). Basic and acidic residues-rich tracts occupy residues 180 to 190 (RGREPHRREIS) and 333 to 351 (IDRE…HSPK).

As to quaternary structure, interacts with SRSF3/SRP20, SRSF9/SRP30, SRSF5/SRP40, and SRSF6/SRP55; this interaction inhibits SRSF family member pre-mRNA splicing. Interacts with splicing factor proteins and KHDRBS3. As to expression, testis-specific.

Its subcellular location is the nucleus. RNA-binding protein involved in pre-mRNA splicing. Required for sperm development. Acts additively with TRA2B to promote exon 7 inclusion of the survival motor neuron SMN. Binds non-specifically to mRNAs. The chain is RNA-binding motif protein, Y chromosome from Mus musculus (Mouse).